The sequence spans 491 residues: Probable V-type proton ATPase subunit B 1 (491 aa).

Residue R380 coordinates ATP.

The protein belongs to the ATPase alpha/beta chains family. In terms of assembly, V-ATPase is a heteromultimeric enzyme made up of two complexes: the ATP-hydrolytic V1 complex and the proton translocation V0 complex. The V1 complex consists of three catalytic AB heterodimers that form a heterohexamer, three peripheral stalks each consisting of EG heterodimers, one central rotor including subunits D and F, and the regulatory subunits C and H. The proton translocation complex V0 consists of the proton transport subunit a, a ring of proteolipid subunits c9c'', rotary subunit d, subunits e and f, and the accessory subunits vah-19/Ac45 and vah-20/PRR.

In terms of biological role, non-catalytic subunit of the V1 complex of vacuolar(H+)-ATPase (V-ATPase), a multisubunit enzyme composed of a peripheral complex (V1) that hydrolyzes ATP and a membrane integral complex (V0) that translocates protons. V-ATPase is responsible for acidifying and maintaining the pH of intracellular compartments and in some cell types, is targeted to the plasma membrane, where it is responsible for acidifying the extracellular environment. Essential for the proper assembly and activity of V-ATPase. Required maternally for early embryogenesis and zygotically during morphogenesis. Specifically, involved in the clearance of apoptotic cell corpses in embryos. Also, during embryonic development, the V-ATPase is required to repress fusion of epidermal cells probably by negatively regulating eff-1-mediated cell fusion. In neurons, required for necrotic cell death by promoting intracellular acidification. Required for cell death induced by hypoxia. Required for acidification of synaptic vesicles and the release of neurotransmitters from adult neurons. The sequence is that of Probable V-type proton ATPase subunit B 1 from Caenorhabditis briggsae.